The sequence spans 474 residues: Pyoverdine export outer membrane protein OpmQ (474 aa).

The first 17 residues, 1 to 17, serve as a signal peptide directing secretion; it reads MSMKNLSLISACLLLGA. The N-palmitoyl cysteine moiety is linked to residue Cys18. Residue Cys18 is the site of S-diacylglycerol cysteine attachment.

Belongs to the outer membrane factor (OMF) (TC 1.B.17) family. Part of the tripartite efflux system PvdRT-OpmQ, which is composed of an inner membrane component with both ATPase and permease domains, PvdT, a periplasmic membrane fusion protein, PvdR, and an outer membrane component, OpmQ.

It is found in the cell outer membrane. Part of the tripartite efflux system PvdRT-OpmQ required for the secretion into the extracellular milieu of the siderophore pyoverdine (PVD), which is involved in iron acquisition. The system is responsible for export of newly synthesized PVD after the final steps of biosynthesis have taken place in the periplasm. It is also responsible for recycling of PVD after internalization of ferri-PVD into the periplasm by the outer-membrane receptor FpvA and release of iron from PVD, thus making PVD available for new cycles of iron uptake. In addition, can expel unwanted metals complexed with PVD from the periplasm into the extracellular medium. This Pseudomonas aeruginosa (strain ATCC 15692 / DSM 22644 / CIP 104116 / JCM 14847 / LMG 12228 / 1C / PRS 101 / PAO1) protein is Pyoverdine export outer membrane protein OpmQ.